The sequence spans 203 residues: Small ribosomal subunit protein uS4 (203 aa).

The S4 RNA-binding domain occupies arginine 93–valine 156.

Belongs to the universal ribosomal protein uS4 family. As to quaternary structure, part of the 30S ribosomal subunit. Contacts protein S5. The interaction surface between S4 and S5 is involved in control of translational fidelity.

Functionally, one of the primary rRNA binding proteins, it binds directly to 16S rRNA where it nucleates assembly of the body of the 30S subunit. Its function is as follows. With S5 and S12 plays an important role in translational accuracy. The sequence is that of Small ribosomal subunit protein uS4 from Streptococcus mutans serotype c (strain ATCC 700610 / UA159).